The following is a 608-amino-acid chain: Dolichyl-diphosphooligosaccharide--protein glycosyltransferase subunit 1 (608 aa).

The signal sequence occupies residues 1–24; the sequence is MEAPAVCLLPLLLLLWAWAPAPGR. At 25-435 the chain is on the lumenal side; it reads ASPEALPLVN…VVHYTFNKVL (411 aa). Residue K188 is modified to N6-acetyllysine. The N-linked (GlcNAc...) asparagine glycan is linked to N300. Residues 436-456 traverse the membrane as a helical segment; sequence MLQEPLLVVAAFYILFFTVIV. The Cytoplasmic segment spans residues 457–607; sequence YVRLDFSITK…VTKIDHILDA (151 aa). K539 is subject to N6-acetyllysine; alternate. A Glycyl lysine isopeptide (Lys-Gly) (interchain with G-Cter in SUMO2); alternate cross-link involves residue K539.

This sequence belongs to the OST1 family. As to quaternary structure, component of the oligosaccharyltransferase (OST) complex. OST exists in two different complex forms which contain common core subunits RPN1, RPN2, OST48, OST4, DAD1 and TMEM258, either STT3A or STT3B as catalytic subunits, and form-specific accessory subunits. STT3A complex assembly occurs through the formation of 3 subcomplexes. Subcomplex 1 contains RPN1 and TMEM258, subcomplex 2 contains the STT3A-specific subunits STT3A, DC2/OSTC, and KCP2 as well as the core subunit OST4, and subcomplex 3 contains RPN2, DAD1, and OST48. The STT3A complex can form stable complexes with the Sec61 complex or with both the Sec61 and TRAP complexes. Interacts with TMEM35A/NACHO. Post-translationally, ubiquitinated by the ECS(ASB11) complex. Ufmylated by UFL1 in response to endoplasmic reticulum stress, promoting reticulophagy of endoplasmic reticulum sheets. In terms of tissue distribution, detected in liver (at protein level).

The protein resides in the endoplasmic reticulum membrane. It participates in protein modification; protein glycosylation. In terms of biological role, subunit of the oligosaccharyl transferase (OST) complex that catalyzes the initial transfer of a defined glycan (Glc(3)Man(9)GlcNAc(2) in eukaryotes) from the lipid carrier dolichol-pyrophosphate to an asparagine residue within an Asn-X-Ser/Thr consensus motif in nascent polypeptide chains, the first step in protein N-glycosylation. N-glycosylation occurs cotranslationally and the complex associates with the Sec61 complex at the channel-forming translocon complex that mediates protein translocation across the endoplasmic reticulum (ER). All subunits are required for a maximal enzyme activity. This chain is Dolichyl-diphosphooligosaccharide--protein glycosyltransferase subunit 1, found in Sus scrofa (Pig).